A 593-amino-acid chain; its full sequence is Insulin-like growth factor 2 mRNA-binding protein 3-B (593 aa).

RRM domains are found at residues 2-75 (NKLY…HSVP) and 81-156 (RKLQ…YIPD). Residues 159 to 208 (ATPQSPSQQLQQPQQQHPQGRRGFGQRGPARQGSPGAAARPKPQSEVPLR) are disordered. Residues 161–176 (PQSPSQQLQQPQQQHP) are compositionally biased toward low complexity. KH domains lie at 204–269 (EVPL…CKII) and 285–352 (EIPL…EEEV). The segment covering 390-402 (SGMPPPSAGVSSP) has biased composition (low complexity). A disordered region spans residues 390–412 (SGMPPPSAGVSSPTTSASYPPFG). KH domains follow at residues 417-482 (SETV…QGRI) and 499-565 (KLEA…QRKI). The disordered stretch occupies residues 571 to 593 (QVRRQQQQQQKTAQSGQPQPRRK).

It belongs to the RRM IMP/VICKZ family. Homodimer and multimer. Associates with microtubules. Interaction with a translocation machinery protein TRAPA of the endoplasmic reticulum. Component of a mRNP complex, at least composed of DAZAP1, IGF2BP3, STAU and VgRBP60. The mRNP complex with DAZAP1, IGF2BP3, STAU and VgRBP60 is only found in the cytoplasm. Interacts with a hnRNP 1 related RNA transport protein VgRBP60 both in the nucleus (in an RNA-independent manner) and the cytoplasm (in an RNA-dependent manner). Found in a B3 activator complex. Expressed in oocytes, kidney and pancreas (at protein level). Expressed in oocytes, kidney and pancreas.

The protein resides in the nucleus. It is found in the cytoplasm. It localises to the endoplasmic reticulum. Its function is as follows. RNA-binding protein that acts as a regulator of mRNA transport and localization. Binds to the RNA sequence motif 5'-UUCAC-3'. Preferentially binds to N6-methyladenosine (m6A)-containing mRNAs and increases their stability. Mediates the specific association of Vg1 RNA to microtubules. May regulate mRNA translation. Binds specifically to the vegetal localization elements (VLE or VgLE) in the 3'-UTR of Vg1 and VegT mRNAs. Binds to the Vg1 and VegT mRNAs in both the nucleus and the cytoplasm. May regulate mRNA translation. Acts as a transcription regulator. Binds to the 5'-[TA]GGTTACT-3' motif within element 3 of the TFIIIA gene promoter. The protein is Insulin-like growth factor 2 mRNA-binding protein 3-B (igf2bp3-b) of Xenopus laevis (African clawed frog).